Here is a 787-residue protein sequence, read N- to C-terminus: MAGVLYDEEYVPQEPDYLYCPYEWEGEDPTQCDANVPSVSYLVEAVKKSFTEGNHDMLISCESYHAECCEGPLMNKGLTLSTYFMSYPGISLPAFGGGVIHVTSARVCMQAFYAVTPGRCSCSCGTQFIYRAKGGTGLTFDATNTISSAFKFEDGKVKWLTEDLGLALLAGCFLKYVPIPHEIEIKIERKVEPVSALDFWEPEGLISDVHFVHPQERALAPEPPMDVEMVRLVRTELFEHFNPTLLLNARSDFSGEKLKEVELPRAQSEPLVPRVCLPRGDDALIDQFFIDKAPEHFNREPATDQWQVESDDFTVDFPTQVRLRERDEDWFRRKPDFAVSSIRTGLEMPRIATKKEMLMAFSKRNVGAPQMVEVPQEIHVKRLADRFFRTFLKEGGWDKGDGHYWDDFFHRKGRKVFSLENCYDDPLSSYLVMLKSAGKFSLDLNFPVRSVPQTITYHEKWVTEVFSPMFLQVMARFFSRLQDWVVVPAGPMADFSRVWPSFEGKCLTEIDLSKFDKSQGKLLHDVQREIFLRLGFPPIWCDWWFKFHESSYLNDKNLGIAFSVDYQRRTGNTATYFGNTLVTMIMMAEVYELDSLPFCGLFSGDDNLIVTDRPLEGRVSLFPNMFNMEAKVMRPGQNYMCSKYLCTVDGRVTPVPDPFKLLKKAGASCPLEHLDDFYESFLDYTKYLVRDEVRTLIPRLMAHRYQVSMDEAGVALDQIMSWRKSKTQFFKHFQYRKPIKDSLEAVKSDFLSAFGKVDDRIRVWRGRRTNHKKEVDALKVPLVSFRE.

Positions 505 to 619 (KCLTEIDLSK…VTDRPLEGRV (115 aa)) constitute a RdRp catalytic domain.

Belongs to the ssRNA positive-strand viruses RNA-directed RNA polymerase family. As to quaternary structure, interacts with replication protein 1a.

The catalysed reaction is RNA(n) + a ribonucleoside 5'-triphosphate = RNA(n+1) + diphosphate. Functionally, RNA-dependent RNA polymerase which replicates the viral genome composed of 3 RNA segments, RNA1, RNA2 and RNA3. The sequence is that of RNA-directed RNA polymerase 2a from Olive latent virus 2 (isolate Italy) (OLV-2).